A 219-amino-acid polypeptide reads, in one-letter code: Elongation factor Ts (219 aa).

Residues 82–85 (TDFV) form an involved in Mg(2+) ion dislocation from EF-Tu region.

It belongs to the EF-Ts family.

Its subcellular location is the cytoplasm. Functionally, associates with the EF-Tu.GDP complex and induces the exchange of GDP to GTP. It remains bound to the aminoacyl-tRNA.EF-Tu.GTP complex up to the GTP hydrolysis stage on the ribosome. The polypeptide is Elongation factor Ts (Gloeobacter violaceus (strain ATCC 29082 / PCC 7421)).